A 366-amino-acid polypeptide reads, in one-letter code: Ribosomal RNA small subunit methyltransferase H 1 (366 aa).

The segment at 1–46 (MADQNINKNEKVLTGQPTENQEPVHKRRERYKGTHPKTFKEKYKER) is disordered. Over residues 25 to 37 (HKRRERYKGTHPK) the composition is skewed to basic residues. S-adenosyl-L-methionine-binding positions include 97–99 (GGH), Asp-117, Phe-147, Asp-166, and Gln-173.

The protein belongs to the methyltransferase superfamily. RsmH family.

It localises to the cytoplasm. It catalyses the reaction cytidine(1402) in 16S rRNA + S-adenosyl-L-methionine = N(4)-methylcytidine(1402) in 16S rRNA + S-adenosyl-L-homocysteine + H(+). In terms of biological role, specifically methylates the N4 position of cytidine in position 1402 (C1402) of 16S rRNA. This is Ribosomal RNA small subunit methyltransferase H 1 from Lachnoclostridium phytofermentans (strain ATCC 700394 / DSM 18823 / ISDg) (Clostridium phytofermentans).